We begin with the raw amino-acid sequence, 744 residues long: Sorting nexin MVP1 (744 aa).

Disordered regions lie at residues 1–40 (MNSNIEDDPWSSGWNDDNDNNNNNNTSINDPLTGATATTT), 218–252 (NRSIQSHSHFGPNNQDDWNIDDSTTISGGGGGGGG), and 273–299 (SRSVGGTQPQQGGGGGSGGGSGSGSGT). Polar residues-rich tracts occupy residues 26-40 (TSINDPLTGATATTT) and 218-243 (NRSIQSHSHFGPNNQDDWNIDDSTTI). Gly residues predominate over residues 283–297 (QGGGGGSGGGSGSGS). Residues 326-444 (GIDLIKIKEV…SFLTVPTDLT (119 aa)) enclose the PX domain. Residues Arg369, Ser371, Lys395, and Arg410 each contribute to the a 1,2-diacyl-sn-glycero-3-phospho-(1D-myo-inositol-3-phosphate) site.

The protein belongs to the sorting nexin family.

It is found in the cytoplasm. The protein localises to the membrane. Functionally, required for vacuolar protein sorting. The chain is Sorting nexin MVP1 (MVP1) from Candida albicans (strain SC5314 / ATCC MYA-2876) (Yeast).